Reading from the N-terminus, the 303-residue chain is N-acetyl-D-glucosamine kinase (303 aa).

ATP is bound by residues 4 to 11 (GFDIGGTK) and 133 to 140 (GVGGGLVL). Residues H157, C177, C179, and C184 each contribute to the Zn(2+) site.

The protein belongs to the ROK (NagC/XylR) family. NagK subfamily.

It carries out the reaction N-acetyl-D-glucosamine + ATP = N-acetyl-D-glucosamine 6-phosphate + ADP + H(+). It functions in the pathway cell wall biogenesis; peptidoglycan recycling. In terms of biological role, catalyzes the phosphorylation of N-acetyl-D-glucosamine (GlcNAc) derived from cell-wall degradation, yielding GlcNAc-6-P. The polypeptide is N-acetyl-D-glucosamine kinase (Salmonella agona (strain SL483)).